The sequence spans 85 residues: Small ribosomal subunit protein bS16 (85 aa).

It belongs to the bacterial ribosomal protein bS16 family.

This chain is Small ribosomal subunit protein bS16, found in Acinetobacter baylyi (strain ATCC 33305 / BD413 / ADP1).